Consider the following 731-residue polypeptide: Radial spoke head 10 homolog B (731 aa).

A disordered region spans residues 1–69; that stretch reads MARGDNMKSS…PNENQPIGEH (69 aa). The segment covering 7-17 has biased composition (polar residues); the sequence is MKSSNKSTPEP. 2 stretches are compositionally biased toward low complexity: residues 18 to 36 and 46 to 57; these read TLSK…SESV and SSSAVCSASTVS. MORN repeat units follow at residues 86–108, 109–131, 132–154, 155–177, 179–201, 204–226, 227–249, 251–273, 284–306, and 307–329; these read YEGE…GGHV, YKGS…DGLK, YQGD…NGST, YEGE…KTLT, YRGQ…QEAT, YKGE…SGNV, YEGQ…DLDQ, YSGQ…RKRA, YTGD…SGAL, and YCGQ…NGRV. Disordered regions lie at residues 353-377 and 709-731; these read TTPF…SPLG and KQEQ…TSIH. A compositionally biased stretch (low complexity) spans 363-377; sequence SKGASQSSSNASPLG. Residues 722–731 are compositionally biased toward polar residues; the sequence is VTTTSVTSIH.

It localises to the cytoplasm. The protein localises to the cytoskeleton. The protein resides in the cilium axoneme. It is found in the cell projection. Its subcellular location is the cilium. It localises to the flagellum. Functionally, may function as part of axonemal radial spoke complexes. Radial spoke complexes are important for ciliary motility. The polypeptide is Radial spoke head 10 homolog B (rsph10b) (Danio rerio (Zebrafish)).